The primary structure comprises 241 residues: Large ribosomal subunit protein uL2 (241 aa).

A disordered region spans residues 200–241 (AVDHPHGGGNRQHPGRPTTISRHAPAGRKVGSIAAKRTGKRR).

This sequence belongs to the universal ribosomal protein uL2 family. In terms of assembly, part of the 50S ribosomal subunit. Forms a bridge to the 30S subunit in the 70S ribosome.

Its function is as follows. One of the primary rRNA binding proteins. Required for association of the 30S and 50S subunits to form the 70S ribosome, for tRNA binding and peptide bond formation. It has been suggested to have peptidyltransferase activity; this is somewhat controversial. Makes several contacts with the 16S rRNA in the 70S ribosome. The chain is Large ribosomal subunit protein uL2 from Methanosphaera stadtmanae (strain ATCC 43021 / DSM 3091 / JCM 11832 / MCB-3).